The following is a 103-amino-acid chain: Small ribosomal subunit protein uS10 (103 aa).

It belongs to the universal ribosomal protein uS10 family. Part of the 30S ribosomal subunit.

In terms of biological role, involved in the binding of tRNA to the ribosomes. The protein is Small ribosomal subunit protein uS10 of Psychrobacter sp. (strain PRwf-1).